Reading from the N-terminus, the 34-residue chain is Potassium channel toxin alpha-KTx 18.2 (34 aa).

3 disulfides stabilise this stretch: Cys-7/Cys-26, Cys-12/Cys-31, and Cys-16/Cys-33.

In terms of tissue distribution, expressed by the venom gland.

It is found in the secreted. Functionally, reversibly blocks Shaker B potassium channels. This chain is Potassium channel toxin alpha-KTx 18.2, found in Tityus discrepans (Venezuelan scorpion).